Consider the following 218-residue polypeptide: DNA endonuclease I-CeuI (218 aa).

2 residues coordinate Mg(2+): Gly65 and Glu66. Residues 71–75 (ISTKK) form an interaction with DNA region. Residue Asp86 participates in Mg(2+) binding. 3 interaction with DNA regions span residues 90–94 (NVTQH), 114–116 (RHK), and 191–199 (KQQGQSNEG).

It belongs to the LAGLIDADG endonuclease family. Homodimer. Mg(2+) is required as a cofactor.

It localises to the plastid. Its subcellular location is the chloroplast. In terms of biological role, endonuclease involved in intron homing. Recognizes a degenerate sequence of 17-19 bp to produce a staggered cut 5 bp downstream from the CeLSU.5 intron insertion site. This is DNA endonuclease I-CeuI from Chlamydomonas moewusii (Chlamydomonas eugametos).